The sequence spans 666 residues: Frizzled-3 (666 aa).

The signal sequence occupies residues 1-22 (MAVSWIVFDLWLLTVFLGQIGG). The FZ domain occupies 23 to 136 (HSLFSCEPIT…CSRFPDCDEP (114 aa)). The Extracellular segment spans residues 23–205 (HSLFSCEPIT…REELSFARYF (183 aa)). Cystine bridges form between C28/C89, C36/C82, C73/C110, C99/C133, and C103/C127. A glycan (N-linked (GlcNAc...) asparagine) is linked at N42. A helical membrane pass occupies residues 206–226 (IGLISIICLSATLFTFLTFLI). Over 227-237 (DVTRFRYPERP) the chain is Cytoplasmic. The chain crosses the membrane as a helical span at residues 238–258 (IIFYAVCYMMVSLIFFIGFLL). Residues 259-288 (EDRVACNASSPAQYKASTVTQGSHNKACTM) lie on the Extracellular side of the membrane. N265 is a glycosylation site (N-linked (GlcNAc...) asparagine). A helical transmembrane segment spans residues 289–309 (LFMVLYFFTMAGSVWWVILTI). Topologically, residues 310-328 (TWFLAAVPKWGSEAIEKKA) are cytoplasmic. Residues 329–349 (LLFHASAWGIPGTLTIILLAM) traverse the membrane as a helical segment. The Extracellular segment spans residues 350–374 (NKIEGDNISGVCFVGLYDVDALRYF). N356 carries N-linked (GlcNAc...) asparagine glycosylation. Residues 375–395 (VLAPLCLYVVVGVSLLLAGII) traverse the membrane as a helical segment. Over 396–420 (SLNRVRIEIPLEKENQDKLVKFMIR) the chain is Cytoplasmic. A helical transmembrane segment spans residues 421-441 (IGVFSILYLVPLLVVIGCYFY). The Extracellular segment spans residues 442-477 (EQAYRGIWETTWIQERCREYHIPCPYQVTQMSRPDL). The helical transmembrane segment at 478–498 (ILFLMKYLMALIVGIPSIFWV) threads the bilayer. Over 499–666 (GSKKTCFEWA…RVIEEDGTSA (168 aa)) the chain is Cytoplasmic. A Lys-Thr-X-X-X-Trp motif, mediates interaction with the PDZ domain of Dvl family members motif is present at residues 502–507 (KTCFEW). The disordered stretch occupies residues 538-666 (RDPNTPIIRK…RVIEEDGTSA (129 aa)). Over residues 550–565 (GTSTQGTSTHASSTQL) the composition is skewed to polar residues. Residues 617–638 (LTDHSRHSSSHRLNEQSRHSSI) show a composition bias toward basic and acidic residues. Residues 639-656 (RDLSNNPMTHITHGTSMN) are compositionally biased toward polar residues.

Belongs to the G-protein coupled receptor Fz/Smo family. As to quaternary structure, interacts with VANGL2. In terms of processing, ubiquitinated by ZNRF3, leading to its degradation by the proteasome. In terms of tissue distribution, expressed in the cortex, diencephalon, rostral brainstem and little or no staining is seen in the striatum or cerebellum. Expressed in both hair cells and supporting cells in the utricle, saccule, cristae and the organ of Corti in the inner ear (at protein level). Highly expressed in the CNS. In skin, it is restricted to the epidermis and to the developing hair follicle.

It is found in the membrane. It localises to the cell membrane. The protein resides in the cell surface. Its subcellular location is the apical cell membrane. Receptor for Wnt proteins. Most of frizzled receptors are coupled to the beta-catenin canonical signaling pathway, which leads to the activation of disheveled proteins, inhibition of GSK-3 kinase, nuclear accumulation of beta-catenin and activation of Wnt target genes. A second signaling pathway involving PKC and calcium fluxes has been seen for some family members, but it is not yet clear if it represents a distinct pathway or if it can be integrated in the canonical pathway, as PKC seems to be required for Wnt-mediated inactivation of GSK-3 kinase. Both pathways seem to involve interactions with G-proteins. Activation by Wnt5A stimulates PKC activity via a G-protein-dependent mechanism. Involved in transduction and intercellular transmission of polarity information during tissue morphogenesis and/or in differentiated tissues. Plays a role in controlling early axon growth and guidance processes necessary for the formation of a subset of central and peripheral major fiber tracts. Required for the development of major fiber tracts in the central nervous system, including: the anterior commissure, the corpus callosum, the thalamocortical, corticothalamic and nigrostriatal tracts, the corticospinal tract, the fasciculus retroflexus, the mammillothalamic tract, the medial lemniscus, and ascending fiber tracts from the spinal cord to the brain. In the peripheral nervous system, controls axon growth in distinct populations of cranial and spinal motor neurons, including the facial branchimotor nerve, the hypoglossal nerve, the phrenic nerve, and motor nerves innervating dorsal limbs. Involved in the migration of cranial neural crest cells. May also be implicated in the transmission of sensory information from the trunk and limbs to the brain. Controls commissural sensory axons guidance after midline crossing along the anterior-posterior axis in the developing spinal cord in a Wnt-dependent signaling pathway. Together with FZD6, is involved in the neural tube closure and plays a role in the regulation of the establishment of planar cell polarity (PCP), particularly in the orientation of asymmetric bundles of stereocilia on the apical faces of a subset of auditory and vestibular sensory cells located in the inner ear. Promotes neurogenesis by maintaining sympathetic neuroblasts within the cell cycle in a beta-catenin-dependent manner. This Mus musculus (Mouse) protein is Frizzled-3 (Fzd3).